A 547-amino-acid polypeptide reads, in one-letter code: Nitrate transporter 2.1 (547 aa).

The next 12 membrane-spanning stretches (helical) occupy residues 53–73 (WICF…APII), 86–106 (NAGV…GIVV), 113–133 (YGAA…ALVT), 143–163 (FFIG…GTMF), 173–193 (AIAA…MPLI), 211–231 (AFFV…LLGI), 262–280 (LGNY…SFGV), 296–316 (FGLN…MNLF), 338–358 (IWAL…LGKV), 366–386 (IVIM…HFGI), 400–420 (GLVG…WFAG), and 433–453 (GFVY…FIWF).

This sequence belongs to the major facilitator superfamily. Nitrate/nitrite porter (TC 2.A.1.8) family.

The protein localises to the cell membrane. Nitrite transport mediated by system 1 is very sensitive to inhibition by nitrate. Functionally, involved in nitrate transport, but does not seem to be able to mediate transport by its own. Acts as a dual component transporter with NAR2 (system 1). Imports nitrate with high affinity when expressed with NAR2 in a heterologous system (Xenopus oocytes). Involved in a high affinity and a high capacity transport specific for both nitrate and nitrite. The chain is Nitrate transporter 2.1 from Chlamydomonas reinhardtii (Chlamydomonas smithii).